Consider the following 630-residue polypeptide: Probable potassium transport system protein Kup (630 aa).

The next 12 helical transmembrane spans lie at 17–37, 51–71, 105–125, 144–164, 175–195, 218–238, 255–275, 283–303, 344–364, 374–394, 402–422, and 428–448; these read LAIA…LYSL, PSAI…VVGI, ITGL…GDAV, PQLS…LFWI, LFGP…IYHI, VLLA…AEAL, YVLV…LLLL, PFFL…STVA, IYVP…VIGF, YGIA…VVMV, LLVA…FGAN, and QGGW…MTWY.

This sequence belongs to the HAK/KUP transporter (TC 2.A.72) family.

The protein localises to the cell inner membrane. The enzyme catalyses K(+)(in) + H(+)(in) = K(+)(out) + H(+)(out). In terms of biological role, transport of potassium into the cell. Likely operates as a K(+):H(+) symporter. The chain is Probable potassium transport system protein Kup from Burkholderia mallei (strain NCTC 10247).